Consider the following 651-residue polypeptide: Bromodomain-containing protein 7 (651 aa).

Residue Lys21 forms a Glycyl lysine isopeptide (Lys-Gly) (interchain with G-Cter in SUMO2) linkage. The segment covering 35 to 45 has biased composition (polar residues); it reads TELSTGSSGHD. Positions 35-132 are disordered; that stretch reads TELSTGSSGH…SSLAKQEEVE (98 aa). A compositionally biased stretch (basic and acidic residues) spans 47-57; sequence SLFEDKNDHDK. Residue Lys52 forms a Glycyl lysine isopeptide (Lys-Gly) (interchain with G-Cter in SUMO2) linkage. Residues 58 to 69 are compositionally biased toward basic residues; the sequence is HKDRKRKKRKKG. The short motif at 65–96 is the Nuclear localization signal element; sequence KRKKGEKQIPGEEKGRKRRRVKEDKKKRDRDR. A compositionally biased stretch (basic and acidic residues) spans 70 to 106; sequence EKQIPGEEKGRKRRRVKEDKKKRDRDRVENEAEKDLQ. Glycyl lysine isopeptide (Lys-Gly) (interchain with G-Cter in SUMO2) cross-links involve residues Lys127, Lys186, Lys197, Lys201, Lys212, and Lys241. The 105-residue stretch at 131–235 folds into the Bromo domain; sequence VEQTPLQEAL…HSGMKILSQE (105 aa). The segment at 253–312 is disordered; that stretch reads TRKQKDGTDTSQSGEDGGCWQREREDSGDAEAHASKSPSKENKKKDNDMLEDKFKSNNLE. The span at 273 to 312 shows a compositional bias: basic and acidic residues; the sequence is QREREDSGDAEAHASKSPSKENKKKDNDMLEDKFKSNNLE. Phosphoserine occurs at positions 279 and 289. Glycyl lysine isopeptide (Lys-Gly) (interchain with G-Cter in SUMO2) cross-links involve residues Lys305 and Lys307. An N6-acetyllysine modification is found at Lys328. Lys344 participates in a covalent cross-link: Glycyl lysine isopeptide (Lys-Gly) (interchain with G-Cter in SUMO2). A Phosphoserine modification is found at Ser380. A Glycyl lysine isopeptide (Lys-Gly) (interchain with G-Cter in SUMO2) cross-link involves residue Lys389. Position 482 is a phosphoserine (Ser482). The residue at position 514 (Thr514) is a Phosphothreonine. Residues 536-567 are a coiled coil; sequence SEEAEIFQKKLDETTRLLRELQEAQNERLSTR. Ser621 is modified (phosphoserine).

In terms of assembly, interacts with TRIM24, PTPN13 and DVL1. Identified in a complex with SMARCA4/BRG1, SMARCC1/BAF155, SMARCE1/BAF57, DPF2/BAF45D and ARID2, subunits of the SWI/SNF-B (PBAF) chromatin remodeling complex. Interacts with IRF2 and HNRPUL1. Interacts (via N-terminus) with TP53. Interacts (via C-terminus) with EP300. Interacts with BRCA1. Interacts (via bromo domain) with histone H3 (via N-terminus) acetylated at 'Lys-14' (H3K14ac). Has low affinity for histone H3 acetylated at 'Lys-9' (H3K9ac). Has the highest affinity for histone H3 that is acetylated both at 'Lys-9' (H3K9ac) and at 'Lys-14' (H3K14ac). Has very low affinity for non-acetylated histone H3. Interacts (via bromo domain) with histone H4 (via N-terminus) acetylated at 'Lys-8' (H3K8ac) (in vitro).

Its subcellular location is the nucleus. It is found in the chromosome. Acts both as coactivator and as corepressor. May play a role in chromatin remodeling. Activator of the Wnt signaling pathway in a DVL1-dependent manner by negatively regulating the GSK3B phosphotransferase activity. Induces dephosphorylation of GSK3B at 'Tyr-216'. Down-regulates TRIM24-mediated activation of transcriptional activation by AR. Transcriptional corepressor that down-regulates the expression of target genes. Binds to target promoters, leading to increased histone H3 acetylation at 'Lys-9' (H3K9ac). Binds to the ESR1 promoter. Recruits BRCA1 and POU2F1 to the ESR1 promoter. Coactivator for TP53-mediated activation of transcription of a set of target genes. Required for TP53-mediated cell-cycle arrest in response to oncogene activation. Promotes acetylation of TP53 at 'Lys-382', and thereby promotes efficient recruitment of TP53 to target promoters. Inhibits cell cycle progression from G1 to S phase. The sequence is that of Bromodomain-containing protein 7 (BRD7) from Pongo abelii (Sumatran orangutan).